We begin with the raw amino-acid sequence, 225 residues long: Peptidyl-tRNA hydrolase (225 aa).

Tyr-14 is a tRNA binding site. The active-site Proton acceptor is the His-19. Residues Phe-64, Asn-66, and Asn-112 each coordinate tRNA. Residues 184–225 form a disordered region; that stretch reads ALRMQPPKPEKPKPAAKAPEAQAPEAAPDERSALQKLADRFR. Residues 198–209 are compositionally biased toward low complexity; sequence AAKAPEAQAPEA. Positions 211–225 are enriched in basic and acidic residues; that stretch reads PDERSALQKLADRFR.

The protein belongs to the PTH family. In terms of assembly, monomer.

The protein resides in the cytoplasm. The catalysed reaction is an N-acyl-L-alpha-aminoacyl-tRNA + H2O = an N-acyl-L-amino acid + a tRNA + H(+). Hydrolyzes ribosome-free peptidyl-tRNAs (with 1 or more amino acids incorporated), which drop off the ribosome during protein synthesis, or as a result of ribosome stalling. Functionally, catalyzes the release of premature peptidyl moieties from peptidyl-tRNA molecules trapped in stalled 50S ribosomal subunits, and thus maintains levels of free tRNAs and 50S ribosomes. The protein is Peptidyl-tRNA hydrolase of Cereibacter sphaeroides (strain ATCC 17023 / DSM 158 / JCM 6121 / CCUG 31486 / LMG 2827 / NBRC 12203 / NCIMB 8253 / ATH 2.4.1.) (Rhodobacter sphaeroides).